A 283-amino-acid polypeptide reads, in one-letter code: MQKKIETVQTLLEALPFIKEFRGKTVVIKYGGSAQETPQLKEKFAEDILLMYLVGIKPVIVHGGGRQINEMLDALKIESKFIEGQRVTSKEVMRIVEMVLSGEINKEIVSLLNSHGAKAIGISGKDAHFISAKAKDFSRWGLTGNITDVKADVISNLIAEKFIPVIAPIAAGGEMGHPGFNINADLCASYVAKAIGAHKIIFLTDTAGVLNNSKELFSTLTKAEVEALKADGTIHGGMVPKVDACLEAIEGGVAKAHIIDGRIEHSMLLELFTSAGVGTQITI.

Residues 64 to 65 (GG), Arg86, and Asn181 each bind substrate.

The protein belongs to the acetylglutamate kinase family. ArgB subfamily.

The protein localises to the cytoplasm. The catalysed reaction is N-acetyl-L-glutamate + ATP = N-acetyl-L-glutamyl 5-phosphate + ADP. Its pathway is amino-acid biosynthesis; L-arginine biosynthesis; N(2)-acetyl-L-ornithine from L-glutamate: step 2/4. In terms of biological role, catalyzes the ATP-dependent phosphorylation of N-acetyl-L-glutamate. In Sulfurimonas denitrificans (strain ATCC 33889 / DSM 1251) (Thiomicrospira denitrificans (strain ATCC 33889 / DSM 1251)), this protein is Acetylglutamate kinase.